An 89-amino-acid polypeptide reads, in one-letter code: uncharacterized protein (89 aa).

A helical membrane pass occupies residues 20-39 (SFAMTTYLNLFVKLLIFLYI).

The protein localises to the membrane. This is an uncharacterized protein from Escherichia coli (strain K12).